The sequence spans 358 residues: Feruloyl esterase B (358 aa).

A signal peptide spans 1-18 (MAIPLVLLLAWLLPTVFA). The interval 19 to 291 (ASLTQVSNFG…VSVVLDWFGI (273 aa)) is catalytic. S136 functions as the Charge relay system in the catalytic mechanism. 2 N-linked (GlcNAc...) asparagine glycosylation sites follow: N179 and N246. The interval 292–321 (TGGGGGNGGGSGSTTTTTSATTTSTGPTGG) is gly/Thr-rich linker. The interval 297-318 (GNGGGSGSTTTTTSATTTSTGP) is disordered. Residues 304–318 (STTTTTSATTTSTGP) show a composition bias toward low complexity. The CBM1 domain occupies 322-358 (CTAAHWDQCGGNGYTGCTSCASPYTCQKVNDYYSQCL).

Belongs to the carbohydrate esterase 1 (CE1) family. Feruloyl esterase type B subfamily.

It is found in the secreted. The enzyme catalyses feruloyl-polysaccharide + H2O = ferulate + polysaccharide.. Its function is as follows. Involved in degradation of plant cell walls. Hydrolyzes the feruloyl-arabinose ester bond in arabinoxylans as well as the feruloyl-galactose and feruloyl-arabinose ester bonds in pectin. Active against methyl esters of caffeate (MCA), but not sinapate (MSA). This chain is Feruloyl esterase B (faeB), found in Talaromyces stipitatus (strain ATCC 10500 / CBS 375.48 / QM 6759 / NRRL 1006) (Penicillium stipitatum).